We begin with the raw amino-acid sequence, 375 residues long: uncharacterized protein (375 aa).

Residues 52–301 (VLLSAHRGSW…KQGFATYHES (250 aa)) form the GP-PDE domain.

This is an uncharacterized protein from Sinorhizobium fredii (strain NBRC 101917 / NGR234).